A 148-amino-acid polypeptide reads, in one-letter code: Probable transporter PD_1893 (148 aa).

4 helical membrane passes run 11 to 31 (FTVA…SEMI), 48 to 68 (NPSL…GMAL), 93 to 113 (IVFG…CPGP), and 118 to 138 (LSTG…GMII).

Belongs to the TsuA/YedE (TC 9.B.102) family.

It localises to the cell inner membrane. The sequence is that of Probable transporter PD_1893 from Xylella fastidiosa (strain Temecula1 / ATCC 700964).